Here is a 685-residue protein sequence, read N- to C-terminus: Glycine--tRNA ligase beta subunit (685 aa).

This sequence belongs to the class-II aminoacyl-tRNA synthetase family. Tetramer of two alpha and two beta subunits.

It localises to the cytoplasm. It carries out the reaction tRNA(Gly) + glycine + ATP = glycyl-tRNA(Gly) + AMP + diphosphate. The chain is Glycine--tRNA ligase beta subunit from Leuconostoc mesenteroides subsp. mesenteroides (strain ATCC 8293 / DSM 20343 / BCRC 11652 / CCM 1803 / JCM 6124 / NCDO 523 / NBRC 100496 / NCIMB 8023 / NCTC 12954 / NRRL B-1118 / 37Y).